A 427-amino-acid polypeptide reads, in one-letter code: Citrate synthase (427 aa).

Position 283 is an N6-acetyllysine (lysine 283). Active-site residues include histidine 306 and aspartate 363.

It belongs to the citrate synthase family. Homohexamer.

The enzyme catalyses oxaloacetate + acetyl-CoA + H2O = citrate + CoA + H(+). It functions in the pathway carbohydrate metabolism; tricarboxylic acid cycle; isocitrate from oxaloacetate: step 1/2. The polypeptide is Citrate synthase (gltA) (Escherichia coli O6:H1 (strain CFT073 / ATCC 700928 / UPEC)).